We begin with the raw amino-acid sequence, 668 residues long: Tyrosine-protein phosphatase non-receptor type ptp-2 (668 aa).

SH2 domains are found at residues 10-113 (NFYY…KKPV) and 134-232 (WWHG…EEPL). The region spanning 264–580 (ISEEFDRLSQ…QFLYKALAFY (317 aa)) is the Tyrosine-protein phosphatase domain. Cys-518 acts as the Phosphocysteine intermediate in catalysis. Residues 603-668 (PRRLRPTPNA…SSTLLKSTKK (66 aa)) form a disordered region. Composition is skewed to low complexity over residues 616-634 (SSARQVTSSRPSSSASSRT) and 652-668 (STSSTSSSSTLLKSTKK).

Belongs to the protein-tyrosine phosphatase family. Non-receptor class 2 subfamily. Expressed in embryonic cells, developing vulva, body wall muscles, head neurons and gonadal sheath cells.

It is found in the cytoplasm. It catalyses the reaction O-phospho-L-tyrosyl-[protein] + H2O = L-tyrosyl-[protein] + phosphate. Functionally, involved in embryonic and larval development. Plays a role in oogenesis by regulating mpk-1 phosphorylation and oocyte maturation in response to major sperm protein (MSP). During the formation of neuromuscular junctions at the larval stage, negatively regulates membrane protrusion from body wall muscles probably downstream of receptor egl-15. Plays a role in fluid homeostasis probably downstream of receptor egl-15 and adapter soc-1. Promotes vulva induction and negatively regulates fertility probably downstream of receptor let-23. Negatively regulates daf-2-mediated repression of dauer formation. This is Tyrosine-protein phosphatase non-receptor type ptp-2 from Caenorhabditis elegans.